A 264-amino-acid polypeptide reads, in one-letter code: Thymidylate synthase (264 aa).

Arginine 21 contributes to the dUMP binding site. A (6R)-5,10-methylene-5,6,7,8-tetrahydrofolate-binding site is contributed by histidine 51. Arginine 126–arginine 127 provides a ligand contact to dUMP. The active-site Nucleophile is cysteine 146. DUMP contacts are provided by residues arginine 166–aspartate 169, asparagine 177, and histidine 207–tyrosine 209. Aspartate 169 is a binding site for (6R)-5,10-methylene-5,6,7,8-tetrahydrofolate. Residue alanine 263 participates in (6R)-5,10-methylene-5,6,7,8-tetrahydrofolate binding.

This sequence belongs to the thymidylate synthase family. Bacterial-type ThyA subfamily. As to quaternary structure, homodimer.

It localises to the cytoplasm. The enzyme catalyses dUMP + (6R)-5,10-methylene-5,6,7,8-tetrahydrofolate = 7,8-dihydrofolate + dTMP. Its pathway is pyrimidine metabolism; dTTP biosynthesis. Functionally, catalyzes the reductive methylation of 2'-deoxyuridine-5'-monophosphate (dUMP) to 2'-deoxythymidine-5'-monophosphate (dTMP) while utilizing 5,10-methylenetetrahydrofolate (mTHF) as the methyl donor and reductant in the reaction, yielding dihydrofolate (DHF) as a by-product. This enzymatic reaction provides an intracellular de novo source of dTMP, an essential precursor for DNA biosynthesis. The sequence is that of Thymidylate synthase from Geobacillus sp. (strain WCH70).